A 191-amino-acid polypeptide reads, in one-letter code: Glycerol-3-phosphate acyltransferase (191 aa).

5 helical membrane passes run 5–25 (IILILSYVIGSIPFSLIIAKI), 51–71 (LAVLALFLDSLKGFVAVYTAQ), 78–98 (DLYIYVSAILAVLGHMFPIWL), 114–134 (IALNISIALAFVFVWLIVFFI), and 153–173 (SFFFQKELFLILLTVAILIFL).

Belongs to the PlsY family. Probably interacts with PlsX.

It is found in the cell membrane. The catalysed reaction is an acyl phosphate + sn-glycerol 3-phosphate = a 1-acyl-sn-glycero-3-phosphate + phosphate. Its pathway is lipid metabolism; phospholipid metabolism. Its function is as follows. Catalyzes the transfer of an acyl group from acyl-phosphate (acyl-PO(4)) to glycerol-3-phosphate (G3P) to form lysophosphatidic acid (LPA). This enzyme utilizes acyl-phosphate as fatty acyl donor, but not acyl-CoA or acyl-ACP. This chain is Glycerol-3-phosphate acyltransferase, found in Wolbachia pipientis subsp. Culex pipiens (strain wPip).